The chain runs to 317 residues: Adenine deaminase (317 aa).

The Zn(2+) site is built by His14, His16, and His194. Glu197 acts as the Proton donor in catalysis. Asp275 provides a ligand contact to Zn(2+). Residue Asp276 participates in substrate binding.

Belongs to the metallo-dependent hydrolases superfamily. Adenosine and AMP deaminases family. Adenine deaminase type 2 subfamily. It depends on Zn(2+) as a cofactor.

It carries out the reaction adenine + H2O + H(+) = hypoxanthine + NH4(+). Functionally, catalyzes the hydrolytic deamination of adenine to hypoxanthine. Plays an important role in the purine salvage pathway and in nitrogen catabolism. The chain is Adenine deaminase from Pseudomonas syringae pv. syringae (strain B728a).